We begin with the raw amino-acid sequence, 381 residues long: MIISASTDYRAAAQRKLPPFLFHYADGGAYAEHTLRHNVSDLASIALRQRVLKNMSDLSLETRLFDETLSMPVALAPVGLTGMYARRGEVQAARAAAAHGIPFTMSTVSVCPIEEVAPAIDRPMWFQLYVLKDRGFMRNALERAKAAGVKTLVFTVDMPVPGARYRDAHSGMSGPNAPLRRVWQAMTHPQWALDVGLLGRPHDLGNISKYRGNPTGLADYIGWLGNNFDPSISWKDLEWIREFWDGPMIIKGILDADDARDAVKFGADGIVVSNHGGRQLDGVLSSARALPAIADAVKGDIKILADSGIRSGLDVVRMIALGADTVLIGRAFLYALATHGEAGVKNLLALFEKEMRVAMVLTGAKSISEITRDSLVRELGA.

The 380-residue stretch at methionine 1–glycine 380 folds into the FMN hydroxy acid dehydrogenase domain. Tyrosine 24 provides a ligand contact to substrate. Positions 106 and 127 each coordinate FMN. A substrate-binding site is contributed by tyrosine 129. Threonine 155 is an FMN binding site. Arginine 164 contributes to the substrate binding site. Lysine 251 contributes to the FMN binding site. The Proton acceptor role is filled by histidine 275. Arginine 278 contacts substrate. FMN is bound at residue aspartate 306 to arginine 330.

The protein belongs to the FMN-dependent alpha-hydroxy acid dehydrogenase family. Homotetramer. The cofactor is FMN.

It localises to the cell inner membrane. The enzyme catalyses (S)-lactate + A = pyruvate + AH2. Catalyzes the conversion of L-lactate to pyruvate. Is coupled to the respiratory chain. The polypeptide is L-lactate dehydrogenase (Pseudomonas entomophila (strain L48)).